We begin with the raw amino-acid sequence, 476 residues long: UDP-N-acetylmuramate--L-alanine ligase (476 aa).

121–127 (GAHGKTT) serves as a coordination point for ATP.

This sequence belongs to the MurCDEF family.

It is found in the cytoplasm. The enzyme catalyses UDP-N-acetyl-alpha-D-muramate + L-alanine + ATP = UDP-N-acetyl-alpha-D-muramoyl-L-alanine + ADP + phosphate + H(+). It participates in cell wall biogenesis; peptidoglycan biosynthesis. In terms of biological role, cell wall formation. In Clavibacter michiganensis subsp. michiganensis (strain NCPPB 382), this protein is UDP-N-acetylmuramate--L-alanine ligase.